Reading from the N-terminus, the 588-residue chain is Adenine deaminase (588 aa).

This sequence belongs to the metallo-dependent hydrolases superfamily. Adenine deaminase family. As to quaternary structure, homodimer. Mn(2+) serves as cofactor.

It carries out the reaction adenine + H2O + H(+) = hypoxanthine + NH4(+). The protein is Adenine deaminase of Escherichia coli O81 (strain ED1a).